A 213-amino-acid polypeptide reads, in one-letter code: Uridine kinase (213 aa).

Position 15 to 22 (15 to 22 (GASASGKS)) interacts with ATP.

It belongs to the uridine kinase family.

It is found in the cytoplasm. It carries out the reaction uridine + ATP = UMP + ADP + H(+). The enzyme catalyses cytidine + ATP = CMP + ADP + H(+). It functions in the pathway pyrimidine metabolism; CTP biosynthesis via salvage pathway; CTP from cytidine: step 1/3. The protein operates within pyrimidine metabolism; UMP biosynthesis via salvage pathway; UMP from uridine: step 1/1. In Salmonella paratyphi A (strain ATCC 9150 / SARB42), this protein is Uridine kinase.